A 350-amino-acid polypeptide reads, in one-letter code: Flap endonuclease 1 (350 aa).

Residues 1–101 (MGVNIREVIP…LEIERRKRVK (101 aa)) are N-domain. Aspartate 30, aspartate 83, glutamate 155, glutamate 157, aspartate 176, aspartate 178, and aspartate 239 together coordinate Mg(2+). Residues 119-261 (AARRYAQMAA…TALKMVKAHR (143 aa)) are I-domain. The segment at 340–348 (QQMGLDAWL) is interaction with PCNA.

The protein belongs to the XPG/RAD2 endonuclease family. FEN1 subfamily. In terms of assembly, interacts with PCNA. PCNA stimulates the nuclease activity without altering cleavage specificity. Mg(2+) is required as a cofactor.

Structure-specific nuclease with 5'-flap endonuclease and 5'-3' exonuclease activities involved in DNA replication and repair. During DNA replication, cleaves the 5'-overhanging flap structure that is generated by displacement synthesis when DNA polymerase encounters the 5'-end of a downstream Okazaki fragment. Binds the unpaired 3'-DNA end and kinks the DNA to facilitate 5' cleavage specificity. Cleaves one nucleotide into the double-stranded DNA from the junction in flap DNA, leaving a nick for ligation. Also involved in the base excision repair (BER) pathway. Acts as a genome stabilization factor that prevents flaps from equilibrating into structures that lead to duplications and deletions. Also possesses 5'-3' exonuclease activity on nicked or gapped double-stranded DNA. This Hyperthermus butylicus (strain DSM 5456 / JCM 9403 / PLM1-5) protein is Flap endonuclease 1.